A 214-amino-acid chain; its full sequence is Thymidylate kinase (214 aa).

12–19 (GLDGSGKS) lines the ATP pocket.

Belongs to the thymidylate kinase family.

It carries out the reaction dTMP + ATP = dTDP + ADP. In terms of biological role, phosphorylation of dTMP to form dTDP in both de novo and salvage pathways of dTTP synthesis. This chain is Thymidylate kinase, found in Bdellovibrio bacteriovorus (strain ATCC 15356 / DSM 50701 / NCIMB 9529 / HD100).